Here is a 1235-residue protein sequence, read N- to C-terminus: DNA polymerase catalytic subunit (1235 aa).

Disordered regions lie at residues 640–691 (QGRF…ETAG) and 1098–1134 (AAAP…ASKP). Residues 650-661 (APKRPAAAREDE) show a composition bias toward basic and acidic residues. The segment covering 662 to 675 (ERPEEEGEDEDERE) has biased composition (acidic residues). A compositionally biased stretch (basic and acidic residues) spans 676-691 (EGGGEREPDGARETAG).

Belongs to the DNA polymerase type-B family. As to quaternary structure, forms a complex with the ssDNA-binding protein UL29, the DNA polymerase processivity factor, and the alkaline exonuclease. Interacts with the putative helicase-primase complex subunit UL8; this interaction may coordinate leading and lagging strand DNA synthesis at the replication fork.

Its subcellular location is the host nucleus. It carries out the reaction DNA(n) + a 2'-deoxyribonucleoside 5'-triphosphate = DNA(n+1) + diphosphate. It catalyses the reaction Endonucleolytic cleavage to 5'-phosphomonoester.. In terms of biological role, replicates viral genomic DNA. The replication complex is composed of six viral proteins: the DNA polymerase, processivity factor, primase, primase-associated factor, helicase, and ssDNA-binding protein. Additionally, the polymerase contains an intrinsic ribonuclease H (RNase H) activity that specifically degrades RNA/DNA heteroduplexes or duplex DNA substrates in the 5' to 3' direction. Therefore, it can catalyze the excision of the RNA primers that initiate the synthesis of Okazaki fragments at a replication fork during viral DNA replication. This is DNA polymerase catalytic subunit from Homo sapiens (Human).